A 342-amino-acid chain; its full sequence is L-lysine 2,3-aminomutase (342 aa).

Residues 106 to 329 (HKYQNRALLL…PRLAREIGGE (224 aa)) form the Radical SAM core domain. The [4Fe-4S] cluster site is built by Cys120, Cys124, and Cys127. An N6-(pyridoxal phosphate)lysine modification is found at Lys332.

It belongs to the radical SAM superfamily. KamA family. [4Fe-4S] cluster is required as a cofactor. Pyridoxal 5'-phosphate serves as cofactor.

The enzyme catalyses L-lysine = D-beta-lysine. In terms of biological role, with EpmA is involved in the beta-lysylation step of the post-translational modification of translation elongation factor P (EF-P) on 'Lys-34'. EpmB appears to act before EpmA. Displays lysine 2,3-aminomutase activity, producing (R)-beta-lysine from (S)-alpha-lysine (L-lysine). The chain is L-lysine 2,3-aminomutase (epmB) from Salmonella typhimurium (strain LT2 / SGSC1412 / ATCC 700720).